The following is a 212-amino-acid chain: Thymidylate kinase (212 aa).

10 to 17 contacts ATP; sequence GLEGAGKT.

Belongs to the thymidylate kinase family.

It catalyses the reaction dTMP + ATP = dTDP + ADP. In terms of biological role, phosphorylation of dTMP to form dTDP in both de novo and salvage pathways of dTTP synthesis. This is Thymidylate kinase from Cronobacter sakazakii (strain ATCC BAA-894) (Enterobacter sakazakii).